Reading from the N-terminus, the 348-residue chain is Phage-like element PBSX protein XkdT (348 aa).

Belongs to the Mu gp47/PBSX XkdT family.

In Bacillus subtilis (strain 168), this protein is Phage-like element PBSX protein XkdT (xkdT).